A 414-amino-acid chain; its full sequence is Gamma-glutamyl phosphate reductase (414 aa).

Belongs to the gamma-glutamyl phosphate reductase family.

It is found in the cytoplasm. The enzyme catalyses L-glutamate 5-semialdehyde + phosphate + NADP(+) = L-glutamyl 5-phosphate + NADPH + H(+). The protein operates within amino-acid biosynthesis; L-proline biosynthesis; L-glutamate 5-semialdehyde from L-glutamate: step 2/2. Functionally, catalyzes the NADPH-dependent reduction of L-glutamate 5-phosphate into L-glutamate 5-semialdehyde and phosphate. The product spontaneously undergoes cyclization to form 1-pyrroline-5-carboxylate. This is Gamma-glutamyl phosphate reductase from Alkaliphilus metalliredigens (strain QYMF).